The primary structure comprises 102 residues: Large ribosomal subunit protein bL21 (102 aa).

It belongs to the bacterial ribosomal protein bL21 family. In terms of assembly, part of the 50S ribosomal subunit. Contacts protein L20.

Functionally, this protein binds to 23S rRNA in the presence of protein L20. In Pelobacter propionicus (strain DSM 2379 / NBRC 103807 / OttBd1), this protein is Large ribosomal subunit protein bL21.